The following is a 1080-amino-acid chain: MPKRTDLRTILIIGAGPIVIGQACEFDYSGAQACKALRAEGFRVVLVNSNPATIMTDPDMADAVYIEPIHWRTVEKIIAKEKPDALLPTMGGQTALNCALDLADHGVLEKYGVELIGAKREAIRMAEDRELFRVAMQEIGLECPKAEVAKSLERALEIQAKVGFPTIIRPSFTLGGTGGGITYNRQEFEEIIKRGLELSPVHEVLVEESVLGWKEFEMEVVRDASDNCIIVCSIENLDPMGVHTGDSITVAPAQTLSDKEYQRLRDASIAVLRKIGVDTGGSNVQFGIDPQTGRVVVIEMNPRVSRSSALASKATGFPIAKIAAKLAVGYTLDELKNEITGGKMPASFEPSIDYVVTKIPRFAFEKFPQADARLTTQMKSVGEVMAMGRTFAESLQKAVRGLETGKVGLEPTGLDLSSEDDLVVLKRELKAPGAERLFYVADAFRAGFAVADVYALSYIDPWFLDQIEEIVAAEGRLVTDGLGSIDGARLRQLKRIGFSDARIAQLTGTNEVAVRALRRVLKVKPVYKRVDSCAGEFATGTAYLYSTYEEECEAAPSDRRKIMILGGGPNRIGQGIEFDYCCVHAALALREDGFETIMVNCNPETVSTDYDTSDRLYFEPLTLEDVLEIVEVEHPVGVIVQYGGQTPLKLAKALEANGVPVIGTSPESIDLAEDRERFQKLVQQLGLRQPPNCTARTAEEALVLAREIGYPLVVRPSYVLGGRAMEIVYGEADLARYVRDAVKVSNDSPVLLDRFLDNAVEVDVDIIADREGQVLIGGVMEHIEEAGVHSGDSSCSLPPYSLSAATQDDLRRQVIRLAQALNVIGLMNTQFAIQSNDDGSDIVYLLEVNPRASRTVPFVSKATGVPLAKIAARCMTGKTLVEQSVTCEVVPAYYAVKEAIFPFAKLQGVDPILGPEMRSTGEVMGVGRSFAAAFARAQEAGDIRAPQPGRAFVSVRDPDKKRVLPVVLALVERGFGVVATAGTYAWLQQNGVACEVVNKVAEGRPHVVDLIKNGEIVYIINTTEGRAAIADSFSIRREALQHCVTYSTTIAGAKALVNSLEFRGTGPVWSLQELHKELQV.

Residues 1–403 are carboxyphosphate synthetic domain; that stretch reads MPKRTDLRTI…SLQKAVRGLE (403 aa). 12 residues coordinate ATP: Arg-129, Arg-169, Gly-175, Gly-176, Glu-208, Val-210, Glu-215, Gly-241, Val-242, His-243, Gln-285, and Glu-299. An ATP-grasp 1 domain is found at 133-328; the sequence is RVAMQEIGLE…IAKIAAKLAV (196 aa). Gln-285, Glu-299, and Asn-301 together coordinate Mg(2+). Mn(2+)-binding residues include Gln-285, Glu-299, and Asn-301. The interval 404–554 is oligomerization domain; it reads TGKVGLEPTG…YSTYEEECEA (151 aa). Positions 555 to 942 are carbamoyl phosphate synthetic domain; sequence APSDRRKIMI…AFARAQEAGD (388 aa). The ATP-grasp 2 domain maps to 679–876; it reads QKLVQQLGLR…LAKIAARCMT (198 aa). Residues Arg-715, Arg-754, Leu-756, Glu-761, Gly-787, Val-788, His-789, Ser-790, Gln-830, and Glu-847 each coordinate ATP. Residues Gln-830, Glu-847, and Asn-849 each contribute to the Mg(2+) site. Residues Gln-830, Glu-847, and Asn-849 each contribute to the Mn(2+) site. The MGS-like domain maps to 943–1080; the sequence is IRAPQPGRAF…LQELHKELQV (138 aa). Residues 943 to 1080 are allosteric domain; sequence IRAPQPGRAF…LQELHKELQV (138 aa).

Belongs to the CarB family. Composed of two chains; the small (or glutamine) chain promotes the hydrolysis of glutamine to ammonia, which is used by the large (or ammonia) chain to synthesize carbamoyl phosphate. Tetramer of heterodimers (alpha,beta)4. It depends on Mg(2+) as a cofactor. Mn(2+) is required as a cofactor.

It carries out the reaction hydrogencarbonate + L-glutamine + 2 ATP + H2O = carbamoyl phosphate + L-glutamate + 2 ADP + phosphate + 2 H(+). It catalyses the reaction hydrogencarbonate + NH4(+) + 2 ATP = carbamoyl phosphate + 2 ADP + phosphate + 2 H(+). It functions in the pathway amino-acid biosynthesis; L-arginine biosynthesis; carbamoyl phosphate from bicarbonate: step 1/1. The protein operates within pyrimidine metabolism; UMP biosynthesis via de novo pathway; (S)-dihydroorotate from bicarbonate: step 1/3. Its function is as follows. Large subunit of the glutamine-dependent carbamoyl phosphate synthetase (CPSase). CPSase catalyzes the formation of carbamoyl phosphate from the ammonia moiety of glutamine, carbonate, and phosphate donated by ATP, constituting the first step of 2 biosynthetic pathways, one leading to arginine and/or urea and the other to pyrimidine nucleotides. The large subunit (synthetase) binds the substrates ammonia (free or transferred from glutamine from the small subunit), hydrogencarbonate and ATP and carries out an ATP-coupled ligase reaction, activating hydrogencarbonate by forming carboxy phosphate which reacts with ammonia to form carbamoyl phosphate. This is Carbamoyl phosphate synthase large chain from Xylella fastidiosa (strain 9a5c).